Consider the following 354-residue polypeptide: Maleylacetate reductase 1 (354 aa).

The protein belongs to the iron-containing alcohol dehydrogenase family. As to quaternary structure, homodimer.

It catalyses the reaction 3-oxoadipate + NAD(+) = maleylacetate + NADH + H(+). It carries out the reaction 3-oxoadipate + NADP(+) = maleylacetate + NADPH + H(+). Its pathway is aromatic compound metabolism; 3-chlorocatechol degradation. In Cupriavidus pinatubonensis (strain JMP 134 / LMG 1197) (Cupriavidus necator (strain JMP 134)), this protein is Maleylacetate reductase 1 (tfdFI).